A 351-amino-acid polypeptide reads, in one-letter code: Glucan endo-1,3-beta-glucosidase (351 aa).

The N-terminal stretch at 1–32 is a signal peptide; sequence MALWYLFNKRSLGAAVLILVGLLMCNIQITGA. Gln33 carries the pyrrolidone carboxylic acid modification. 2 N-linked (GlcNAc...) asparagine glycosylation sites follow: Asn79 and Asn99. Glu128 functions as the Proton donor in the catalytic mechanism. N-linked (GlcNAc...) asparagine glycosylation occurs at Asn235. Catalysis depends on Glu268, which acts as the Nucleophile.

Belongs to the glycosyl hydrolase 17 family. In terms of processing, glycosylated. Post-translationally, the N-terminus is blocked.

The protein resides in the secreted. It is found in the extracellular space. It localises to the extracellular matrix. It catalyses the reaction Hydrolysis of (1-&gt;3)-beta-D-glucosidic linkages in (1-&gt;3)-beta-D-glucans.. Functionally, implicated in the defense of plants against pathogens. The protein is Glucan endo-1,3-beta-glucosidase (SP41B) of Nicotiana tabacum (Common tobacco).